The sequence spans 277 residues: MERVRGLVELLRPGNAVAAGGLTFIGAFVAGGLSSPQSMAFAVVATVLATGAGNAINDYFDRDIDAINEPDRPIPRGAVSPRGALVYSVALFAVAVVLTLLLPWLAIAIAAINLVALVAYTEVFKGLPGVGNALVAYLTGSTFLYGGAAVGGDLAAVVVLFALAACATMAREIVKDVEDIDGDRAEGLRTLPIVIGERRSLYVAAGFVVVAVLSSPLPYLLGLFGWVYLVVLVPALCGLAAATWRSFSDPTTGQAWLKASMFAAAVAFVIGRLAVVA.

A run of 7 helical transmembrane segments spans residues 13–33 (PGNA…AGGL), 40–60 (AFAV…NDYF), 89–109 (VALF…AIAI), 143–163 (FLYG…LFAL), 199–219 (RSLY…PLPY), 220–240 (LLGL…CGLA), and 256–276 (WLKA…LAVV).

The protein belongs to the UbiA prenyltransferase family. DGGGP synthase subfamily. It depends on Mg(2+) as a cofactor.

It localises to the cell membrane. The enzyme catalyses sn-3-O-(geranylgeranyl)glycerol 1-phosphate + (2E,6E,10E)-geranylgeranyl diphosphate = 2,3-bis-O-(geranylgeranyl)-sn-glycerol 1-phosphate + diphosphate. It participates in membrane lipid metabolism; glycerophospholipid metabolism. Its function is as follows. Prenyltransferase that catalyzes the transfer of the geranylgeranyl moiety of geranylgeranyl diphosphate (GGPP) to the C2 hydroxyl of (S)-3-O-geranylgeranylglyceryl phosphate (GGGP). This reaction is the second ether-bond-formation step in the biosynthesis of archaeal membrane lipids. The polypeptide is Digeranylgeranylglyceryl phosphate synthase (Natronomonas pharaonis (strain ATCC 35678 / DSM 2160 / CIP 103997 / JCM 8858 / NBRC 14720 / NCIMB 2260 / Gabara) (Halobacterium pharaonis)).